The chain runs to 211 residues: Thymidine kinase (211 aa).

ATP is bound by residues 9–16 (STMNAGKS) and 87–90 (DEAQ). Catalysis depends on glutamate 88, which acts as the Proton acceptor. Zn(2+) contacts are provided by cysteine 145, cysteine 147, cysteine 182, and histidine 185.

Belongs to the thymidine kinase family. In terms of assembly, homotetramer.

The protein localises to the cytoplasm. The enzyme catalyses thymidine + ATP = dTMP + ADP + H(+). This Rhodopirellula baltica (strain DSM 10527 / NCIMB 13988 / SH1) protein is Thymidine kinase.